The chain runs to 197 residues: Holliday junction branch migration complex subunit RuvA (197 aa).

Positions 1–64 (MIASIRGILI…EDSLTLYGFE (64 aa)) are domain I. Residues 65–145 (TVEQRQLFET…GLPTGAAVTP (81 aa)) are domain II. The tract at residues 146–148 (AVA) is flexible linker. A domain III region spans residues 148-197 (AAANAELSEALISLGFTDAEAAAAIAALPSDAPPDLEERVRLALRYFSAS).

This sequence belongs to the RuvA family. Homotetramer. Forms an RuvA(8)-RuvB(12)-Holliday junction (HJ) complex. HJ DNA is sandwiched between 2 RuvA tetramers; dsDNA enters through RuvA and exits via RuvB. An RuvB hexamer assembles on each DNA strand where it exits the tetramer. Each RuvB hexamer is contacted by two RuvA subunits (via domain III) on 2 adjacent RuvB subunits; this complex drives branch migration. In the full resolvosome a probable DNA-RuvA(4)-RuvB(12)-RuvC(2) complex forms which resolves the HJ.

It localises to the cytoplasm. In terms of biological role, the RuvA-RuvB-RuvC complex processes Holliday junction (HJ) DNA during genetic recombination and DNA repair, while the RuvA-RuvB complex plays an important role in the rescue of blocked DNA replication forks via replication fork reversal (RFR). RuvA specifically binds to HJ cruciform DNA, conferring on it an open structure. The RuvB hexamer acts as an ATP-dependent pump, pulling dsDNA into and through the RuvAB complex. HJ branch migration allows RuvC to scan DNA until it finds its consensus sequence, where it cleaves and resolves the cruciform DNA. This Roseiflexus sp. (strain RS-1) protein is Holliday junction branch migration complex subunit RuvA.